A 479-amino-acid polypeptide reads, in one-letter code: UDP-N-acetylmuramate--L-alanine ligase (479 aa).

128–134 serves as a coordination point for ATP; sequence GAHGKTT.

This sequence belongs to the MurCDEF family.

Its subcellular location is the cytoplasm. It carries out the reaction UDP-N-acetyl-alpha-D-muramate + L-alanine + ATP = UDP-N-acetyl-alpha-D-muramoyl-L-alanine + ADP + phosphate + H(+). Its pathway is cell wall biogenesis; peptidoglycan biosynthesis. Its function is as follows. Cell wall formation. This chain is UDP-N-acetylmuramate--L-alanine ligase, found in Psychrobacter arcticus (strain DSM 17307 / VKM B-2377 / 273-4).